The primary structure comprises 1002 residues: Chitin synthase II (1002 aa).

2 disordered regions span residues 1–165 and 178–209; these read MDRP…GRTS and LDGS…SGSQ. The span at 63–78 shows a compositional bias: low complexity; sequence SYQPSVVSSHSRSASV. Asparagine 123 carries N-linked (GlcNAc...) asparagine glycosylation. Asparagine 336 is a glycosylation site (N-linked (GlcNAc...) asparagine). 8 helical membrane-spanning segments follow: residues 627–647, 669–689, 704–724, 740–760, 780–800, 808–828, 906–926, and 940–960; these read WLNG…QILA, LLFT…VAGG, SVIF…QFIL, SMII…YIVV, LIVS…LYLE, SLQY…YAFC, YMVV…SEIY, and ILWA…TFAI.

The protein belongs to the chitin synthase family. Class II subfamily. As to expression, expressed in hyphal bodies.

It localises to the cell membrane. It carries out the reaction [(1-&gt;4)-N-acetyl-beta-D-glucosaminyl](n) + UDP-N-acetyl-alpha-D-glucosamine = [(1-&gt;4)-N-acetyl-beta-D-glucosaminyl](n+1) + UDP + H(+). In terms of biological role, polymerizes chitin, a structural polymer of the cell wall and septum, by transferring the sugar moiety of UDP-GlcNAc to the non-reducing end of the growing chitin polymer. Contributes to the production of conidia and the ability of fungal conidia to germinate. Involved in fungal stress tolerances. The sequence is that of Chitin synthase II from Metarhizium acridum (strain CQMa 102).